The following is a 209-amino-acid chain: Superoxide dismutase [Mn/Fe] (209 aa).

Fe(3+) is bound by residues H38, H90, D172, and H176. 4 residues coordinate Mn(2+): H38, H90, D172, and H176.

It belongs to the iron/manganese superoxide dismutase family. It depends on Mn(2+) as a cofactor. Requires Fe(3+) as cofactor.

The catalysed reaction is 2 superoxide + 2 H(+) = H2O2 + O2. Destroys superoxide anion radicals which are normally produced within the cells and which are toxic to biological systems. Catalyzes the dismutation of superoxide anion radicals into O2 and H2O2 by successive reduction and oxidation of the transition metal ion at the active site. This chain is Superoxide dismutase [Mn/Fe] (sodB), found in Rickettsia conorii (strain ATCC VR-613 / Malish 7).